A 477-amino-acid polypeptide reads, in one-letter code: 3-isopropylmalate dehydratase large subunit (477 aa).

[4Fe-4S] cluster contacts are provided by Cys351, Cys411, and Cys414.

Belongs to the aconitase/IPM isomerase family. LeuC type 1 subfamily. As to quaternary structure, heterodimer of LeuC and LeuD. Requires [4Fe-4S] cluster as cofactor.

It carries out the reaction (2R,3S)-3-isopropylmalate = (2S)-2-isopropylmalate. Its pathway is amino-acid biosynthesis; L-leucine biosynthesis; L-leucine from 3-methyl-2-oxobutanoate: step 2/4. Its function is as follows. Catalyzes the isomerization between 2-isopropylmalate and 3-isopropylmalate, via the formation of 2-isopropylmaleate. The protein is 3-isopropylmalate dehydratase large subunit of Kineococcus radiotolerans (strain ATCC BAA-149 / DSM 14245 / SRS30216).